Reading from the N-terminus, the 189-residue chain is Mediator of RNA polymerase II transcription subunit 28 (189 aa).

Residues Y75–Q115 are a coiled coil. The tract at residues P124 to P147 is disordered. Residues M129–P139 are compositionally biased toward gly residues.

It belongs to the Mediator complex subunit 28 family. As to quaternary structure, component of the Mediator complex, which includes at least CDK8, MED4, MED6, MED11, MED14, MED17, MED18, MED20, MED21, MED22, MED27, MED28, MED30 and MED31.

It is found in the nucleus. Its function is as follows. Component of the Mediator complex, a coactivator involved in the regulated transcription of nearly all RNA polymerase II-dependent genes. Mediator functions as a bridge to convey information from gene-specific regulatory proteins to the basal RNA polymerase II transcription machinery. Mediator is recruited to promoters by direct interactions with regulatory proteins and serves as a scaffold for the assembly of a functional preinitiation complex with RNA polymerase II and the general transcription factors. The protein is Mediator of RNA polymerase II transcription subunit 28 (MED28) of Drosophila melanogaster (Fruit fly).